The sequence spans 99 residues: Small ribosomal subunit protein uS14m (99 aa).

It belongs to the universal ribosomal protein uS14 family.

It is found in the mitochondrion. This Acanthamoeba castellanii (Amoeba) protein is Small ribosomal subunit protein uS14m (RPS14).